Reading from the N-terminus, the 204-residue chain is MTRLRLLLLLGLLLRVAVCSVNTITLCKIGEFKHENLCCLQCSAGTYLRNPCQENHNKSECAPCDSEHFIDHKNRESECFPCSVCRDDQEEVAKCSRTADRVCQCKQGTYCDSENCLERCHTCSSCPDGRVVRKCNATMDTVCDKFDSEPGQSGSQCFCFSKPLGIVVIIAAFIIIIGAVIILILKIICYCKRGENIQLSSTML.

A signal peptide spans 1–19 (MTRLRLLLLLGLLLRVAVC). Topologically, residues 20–164 (SVNTITLCKI…SQCFCFSKPL (145 aa)) are extracellular. 9 cysteine pairs are disulfide-bonded: Cys27/Cys38, Cys39/Cys52, Cys42/Cys61, Cys64/Cys79, Cys82/Cys95, Cys85/Cys103, Cys105/Cys120, Cys123/Cys135, and Cys126/Cys143. TNFR-Cys repeat units follow at residues 27-61 (CKIGEFKHENLCCLQCSAGTYLRNPCQENHNKSEC), 63-103 (PCDS…DRVC), and 104-143 (QCKQGTYCDSENCLERCHTCSSCPDGRVVRKCNATMDTVC). The N-linked (GlcNAc...) asparagine glycan is linked to Asn57. Asn136 carries an N-linked (GlcNAc...) asparagine glycan. A helical membrane pass occupies residues 165–185 (GIVVIIAAFIIIIGAVIILIL). At 186-204 (KIICYCKRGENIQLSSTML) the chain is on the cytoplasmic side.

Expressed in thymus and spleen. Detectable levels in lung.

Its subcellular location is the membrane. This Mus musculus (Mouse) protein is Tumor necrosis factor receptor superfamily member 26 (Tnfrsf26).